Reading from the N-terminus, the 145-residue chain is UPF0735 ACT domain-containing protein CPR_1404 (145 aa).

In terms of domain architecture, ACT spans 69 to 144 (IFNMVVTHEK…GVEKVEFVAM (76 aa)).

It belongs to the UPF0735 family.

The chain is UPF0735 ACT domain-containing protein CPR_1404 from Clostridium perfringens (strain SM101 / Type A).